The following is a 162-amino-acid chain: Interleukin-15 (162 aa).

A signal peptide spans 1-29; the sequence is MRILKPHLRSTSIQCYLCLLLNSHFLTEA. The propeptide occupies 30–48; it reads GIHVFILGCISAGLPKTEA. Disulfide bonds link cysteine 83–cysteine 133 and cysteine 90–cysteine 136. N-linked (GlcNAc...) asparagine glycosylation occurs at asparagine 108.

It belongs to the IL-15/IL-21 family.

The protein localises to the secreted. In terms of biological role, cytokine that plays a major role in the development of inflammatory and protective immune responses to microbial invaders and parasites by modulating immune cells of both the innate and adaptive immune systems. Stimulates the proliferation of natural killer cells, T-cells and B-cells and promotes the secretion of several cytokines. In monocytes, induces the production of IL8 and monocyte chemotactic protein 1/CCL2, two chemokines that attract neutrophils and monocytes respectively to sites of infection. Unlike most cytokines, which are secreted in soluble form, IL15 is expressed in association with its high affinity IL15RA on the surface of IL15-producing cells and delivers signals to target cells that express IL2RB and IL2RG receptor subunits. Binding to its receptor triggers the phosphorylation of JAK1 and JAK3 and the recruitment and subsequent phosphorylation of signal transducer and activator of transcription-3/STAT3 and STAT5. In mast cells, induces the rapid tyrosine phosphorylation of STAT6 and thereby controls mast cell survival and release of cytokines such as IL4. This chain is Interleukin-15 (IL15), found in Ailuropoda melanoleuca (Giant panda).